Reading from the N-terminus, the 119-residue chain is Ghilanten (119 aa).

At Q1 the chain carries Pyrrolidone carboxylic acid. Cystine bridges form between C8-C19, C13-C26, C28-C48, C33-C51, C37-C53, C62-C73, C67-C80, C82-C103, C88-C106, and C92-C108. The 26-residue stretch at 28-53 folds into the Antistasin-like 1 domain; it reads CPEVRCRVYCSHGFQRSRYGCEVCRC. Positions 83–108 constitute an Antistasin-like 2 domain; that stretch reads KIDINCRKTCPNGLKRDKLGCEYCEC. Heparin is bound by residues 97-100 and 111-118; these read KRDK and KRKLVPRL.

It belongs to the protease inhibitor I15 (antistasin) family.

Its subcellular location is the secreted. Its function is as follows. This highly disulfide-bonded protein is a potent inhibitor of factor Xa. May have therapeutic utility as an anticoagulant. Also exhibits a strong metastatic activity. The sequence is that of Ghilanten from Haementeria ghilianii (Amazon leech).